The sequence spans 373 residues: D-alanine--D-alanine ligase (373 aa).

The region spanning 165-369 (KRLAREAGIP…FGDLVSALIA (205 aa)) is the ATP-grasp domain. Position 192–247 (192–247 (KERLGLPVFVKPARGGSSIGISKVDSWEEFDAAIDLAFSNDNKVIVEAMIHGAEVE)) interacts with ATP. Mg(2+) contacts are provided by aspartate 324, glutamate 336, and asparagine 338.

The protein belongs to the D-alanine--D-alanine ligase family. The cofactor is Mg(2+). It depends on Mn(2+) as a cofactor.

It is found in the cytoplasm. It carries out the reaction 2 D-alanine + ATP = D-alanyl-D-alanine + ADP + phosphate + H(+). It functions in the pathway cell wall biogenesis; peptidoglycan biosynthesis. Cell wall formation. The chain is D-alanine--D-alanine ligase from Corynebacterium jeikeium (strain K411).